An 856-amino-acid polypeptide reads, in one-letter code: MSNSQVQPETLSEYLAHLPMTDEQRAELAGCQSFSELHERLSSKTFDAPTEAAQASVGKRLILSTAEELQDAEMLVLDASGRVSMKATPPIRRTKVVPEPWRTNILVRGWRRLTGRTNPPQPPKDANVLPAARWRTVGSIRRYILLVLMLGQTIVAGWYMKGIMPYQGWSFVDLEEVLHQPLLQTATQVLPYALQTSILIMFGILFCWVSAGFWTALMGFLELLTGHDKYRISGKSAGNEPIPKDARTALVMPICNEDVPRVFAGLRATFESVAATGDLDRFDFFVLSDSNDTDICVAEQQAWLDVCREAKGFGKIFYRRRRRRVKRKSGNLDDFCRRWGGDYKYMVVLDADSVMSGECLTSLVRLMEATPDAGIIQTAPRASGMDTLYARMQQFATRVYGPLFTAGLHFWQLGESHYWGHNAIIRMKPFIDHCALAPLPGKGAFSGAILSHDFVEAALMRRAGWGVWIAYDLPGSYEELPPNLLDELKRDRRWCHGNLMNFRLFLVKGMHPVHRAVFLTGVMSYLSAPLWFFFLVLSTALLAVNTLMEPQYFLEPRQLYPLWPQWHPDKAIALFSTTIVLLFLPKLLSIILIWAKGAKEFGGKFKVTLSMLLEMLFSMLLAPVRMIFHTRFVLAAFLGWAATWNSPQRDDDSTPWSEAVKRHGPQTLLGFFWALLVIWLNPSFLWWLVPIVGSLMLSIPVSVISSRVGLGLKSRDESLFLIPEEYNPPQALLATDQYTHENRWHALNDGFVRAVVDPQQNALACSLATSRHGQAEPIEWLRQERVRHAIKVGPAGLNNHDRLQLLSDPVALARLHEQVWAEGHAEWLDAWRASVKADPHAPLLPLKPVSLQAQPA.

Helical transmembrane passes span 144-164 (ILLV…KGIM), 198-218 (ILIM…TALM), 517-537 (VFLT…FLVL), 574-594 (LFST…ILIW), 608-628 (TLSM…RMIF), and 691-711 (IVGS…VGLG).

The protein belongs to the glycosyltransferase 2 family. OpgH subfamily.

The protein resides in the cell inner membrane. It participates in glycan metabolism; osmoregulated periplasmic glucan (OPG) biosynthesis. Functionally, involved in the biosynthesis of osmoregulated periplasmic glucans (OPGs). The protein is Glucans biosynthesis glucosyltransferase H of Pseudomonas fluorescens (strain Pf0-1).